Reading from the N-terminus, the 288-residue chain is 2-hydroxy-6-oxononadienedioate/2-hydroxy-6-oxononatrienedioate hydrolase (288 aa).

In terms of domain architecture, AB hydrolase-1 spans 38–274 (ALVLLHGSGP…RCGHWAQWEH (237 aa)). Catalysis depends on histidine 268, which acts as the Proton acceptor.

Belongs to the AB hydrolase superfamily. MhpC family. As to quaternary structure, homodimer.

It catalyses the reaction (2Z,4E)-2-hydroxy-6-oxonona-2,4-dienedioate + H2O = (2Z)-2-hydroxypenta-2,4-dienoate + succinate + H(+). The enzyme catalyses (2Z,4E,7E)-2-hydroxy-6-oxonona-2,4,7-trienedioate + H2O = (2Z)-2-hydroxypenta-2,4-dienoate + fumarate + H(+). It participates in aromatic compound metabolism; 3-phenylpropanoate degradation. In terms of biological role, catalyzes the cleavage of the C5-C6 bond of 2-hydroxy-6-oxononadienedioate and 2-hydroxy-6-oxononatrienedioate, a dienol ring fission product of the bacterial meta-cleavage pathway for degradation of phenylpropionic acid. In Burkholderia vietnamiensis (strain G4 / LMG 22486) (Burkholderia cepacia (strain R1808)), this protein is 2-hydroxy-6-oxononadienedioate/2-hydroxy-6-oxononatrienedioate hydrolase.